The sequence spans 764 residues: Protective antigen (764 aa).

The first 29 residues, methionine 1–alanine 29, serve as a signal peptide directing secretion. The segment at glutamate 30–alanine 287 is domain 1, calcium-binding; LF and EF binding sites. One can recognise a PA14 domain in the interval serine 43–asparagine 179. A disordered region spans residues serine 176–aspartate 214. 5 residues coordinate Ca(2+): aspartate 206, aspartate 208, aspartate 210, isoleucine 212, and glutamate 217. Residues phenylalanine 231 to isoleucine 239 form an alpha-clamp region. Residues serine 251, lysine 254, and aspartate 264 each coordinate Ca(2+). The domain 2, membrane insertion and heptamerization stretch occupies residues tyrosine 288–threonine 516. Positions lysine 302 to histidine 333 are disordered. Residues glutamine 306 to threonine 327 are compositionally biased toward polar residues. Beta stranded transmembrane passes span glutamate 331–phenylalanine 342 and isoleucine 345–serine 354. Residues threonine 517 to arginine 624 are domain 3, heptamerization. The segment at phenylalanine 625–glycine 764 is domain 4, binding to the receptor.

The protein belongs to the bacterial binary toxin family. Interacts with host ANTXR1 and ANTXR2. As to quaternary structure, homooligomer; homooligomerizes to form homoheptamers (PA-63(7)) or homooctamers (PA-63(8)). PA-63(7) or PA-63(8) form ring-shaped oligomers that are in a pre-pore conformation, which do not penetrate the host membrane. PA-63(8) displays an enhanced stability, suggesting that this form circulates in the blood to reach and exert toxicity even in distant tissues. Interacts with lethal factor (LF) and edema factor (EF); can bind LF and EF simultaneously and interaction takes place following homooligomerization on the host cell membrane. PA-63(7) homoheptamer interacts with three molecules of LF to form the PA(7)LF(3) complex, in which the relative position of the N-terminal alpha-helices in the three LFs determines which factor is translocated first. In terms of processing, proteolytic activation by FURIN cleaves the protein in two parts, PA-20 and PA-63; the latter is the mature protein. The cleavage occurs at the cell surface and probably in the serum of infected animals as well; both native and cleaved PA are able to bind to the cell receptor. The release of PA-20 from the remaining receptor-bound PA-63 exposes the binding site for EF and LF, and promotes oligomerization and internalization of the protein.

It is found in the secreted. It localises to the host cell membrane. Its subcellular location is the host endosome membrane. Functionally, protective antigen constitutes one of the three proteins composing the anthrax toxin; it mediates attachment to host cells and translocation of edema factor (EF) and lethal factor (LF) into the host cytoplasm. PA associated with LF forms the lethal toxin (LeTx) and causes death when injected; PA associated with EF forms the edema toxin (EdTx) and produces edema. PA induces immunity to infection with anthrax. In terms of biological role, mediates the attachment to host cells by binding host cell receptors ANTXR1 and ANTXR2. Following host cell surface attachment, PA is cleaved by FURIN to generate the PA-63 (Protective antigen PA-63) form, which constitutes the mature form of the protein that oligomerizes and forms a pore to translocate the enzymatic toxin components edema factor (EF) and lethal factor (LF) into the host cytosol. Its function is as follows. Mature form that oligomerizes and forms a pore to translocate the enzymatic toxin components edema factor (EF) and lethal factor (LF) into the host cytosol. Following attachment to host cell receptors and cleavage by FURIN, homooligomerizes to form ring-shaped oligomers that are in a pre-pore conformation, and associates with EF and LF. Toxin-leaded complexes are then endocytosed in a clathrin-dependent process, followed by a conformational change of oligomerized PA-63 from the pre-pore to pore state, which is triggered by the low pH in the endosome. Once active, the pore mediates unfolding of EF and LF, which pass through the pore and translocate into the host cytosol. The chain is Protective antigen (pagA) from Bacillus anthracis.